Consider the following 1155-residue polypeptide: Protein BREAST CANCER SUSCEPTIBILITY 2 homolog B (1155 aa).

4 BRCA2 repeats span residues 63 to 97, 116 to 150, 163 to 197, and 257 to 291; these read MPGE…ENVA, TAET…SDMI, FGVP…LEED, and LKVP…DPEL.

In terms of assembly, interacts with RAD51 and DMC1. Interacts with DSS1(I) and DSS1(V). Can interact with both RAD51 and DSS1(I) or both DMC1 and DSS1(I) in a tripartite complex. In terms of tissue distribution, expressed in flower buds.

Its function is as follows. Involved in double-strand break repair and/or homologous recombination by mediating RAD51- and DMC1-facilitated DNA repair. Plays an essential role in both somatic and meiotic homologous recombination. Is crucial for the formation of RAD51 and DMC1 foci during male meiotic homologous recombination in prophase I. The protein is Protein BREAST CANCER SUSCEPTIBILITY 2 homolog B of Arabidopsis thaliana (Mouse-ear cress).